The chain runs to 93 residues: Ribonuclease P protein component 1 (93 aa).

This sequence belongs to the eukaryotic/archaeal RNase P protein component 1 family. Consists of a catalytic RNA component and at least 4-5 protein subunits.

The protein localises to the cytoplasm. The catalysed reaction is Endonucleolytic cleavage of RNA, removing 5'-extranucleotides from tRNA precursor.. In terms of biological role, part of ribonuclease P, a protein complex that generates mature tRNA molecules by cleaving their 5'-ends. In Methanosphaera stadtmanae (strain ATCC 43021 / DSM 3091 / JCM 11832 / MCB-3), this protein is Ribonuclease P protein component 1.